A 158-amino-acid chain; its full sequence is Regulator of sigma D (158 aa).

Belongs to the Rsd/AlgQ family. As to quaternary structure, interacts with RpoD.

The protein localises to the cytoplasm. In terms of biological role, binds RpoD and negatively regulates RpoD-mediated transcription activation by preventing the interaction between the primary sigma factor RpoD with the catalytic core of the RNA polymerase and with promoter DNA. May be involved in replacement of the RNA polymerase sigma subunit from RpoD to RpoS during the transition from exponential growth to the stationary phase. The polypeptide is Regulator of sigma D (Shigella dysenteriae serotype 1 (strain Sd197)).